The primary structure comprises 73 residues: Omega-hexatoxin-Ar1b (73 aa).

An N-terminal signal peptide occupies residues 1-22; that stretch reads MNTATGFIVLLVLATVLGCIEA. Positions 23–37 are excised as a propeptide; sequence GESHVREDAMGRARR. Cystine bridges form between Cys-40–Cys-54, Cys-47–Cys-58, and Cys-53–Cys-72.

This sequence belongs to the neurotoxin 08 (Shiva) family. 01 (omega toxin) subfamily. As to expression, expressed by the venom gland.

It is found in the secreted. Insecticidal toxin that reversibly and voltage-independently blocks both mid-low- (M-LVA) and high-voltage-activated (HVA) calcium channels (Cav) in cockroach DUM neurons. Also causes a modest block of insect sodium channel currents (Nav). Induces potent excitatory symptoms, followed by flaccid paralysis leading to death in house crickets. This Atrax robustus (Sydney funnel-web spider) protein is Omega-hexatoxin-Ar1b.